A 276-amino-acid chain; its full sequence is Octanoyltransferase LipM (276 aa).

Residues 32-247 (GALPPVIRFY…GFEKGLDIKL (216 aa)) enclose the BPL/LPL catalytic domain. C149 (acyl-thioester intermediate) is an active-site residue.

The protein belongs to the octanoyltransferase LipM family. In terms of assembly, monomer.

The catalysed reaction is octanoyl-[ACP] + L-lysyl-[protein] = N(6)-octanoyl-L-lysyl-[protein] + holo-[ACP] + H(+). It participates in protein modification; protein lipoylation via endogenous pathway; protein N(6)-(lipoyl)lysine from octanoyl-[acyl-carrier-protein]. In terms of biological role, catalyzes the transfer of endogenously produced octanoic acid from octanoyl-acyl-carrier-protein onto the lipoyl domain of GcvH, an intermediate carrier during protein lipoylation. This chain is Octanoyltransferase LipM, found in Macrococcus caseolyticus (strain JCSC5402) (Macrococcoides caseolyticum).